A 292-amino-acid chain; its full sequence is Elongation factor Ts (292 aa).

Residues 80–83 (TDSV) are involved in Mg(2+) ion dislocation from EF-Tu.

It belongs to the EF-Ts family.

Its subcellular location is the cytoplasm. Associates with the EF-Tu.GDP complex and induces the exchange of GDP to GTP. It remains bound to the aminoacyl-tRNA.EF-Tu.GTP complex up to the GTP hydrolysis stage on the ribosome. This chain is Elongation factor Ts, found in Lactiplantibacillus plantarum (strain ATCC BAA-793 / NCIMB 8826 / WCFS1) (Lactobacillus plantarum).